A 200-amino-acid polypeptide reads, in one-letter code: MPIEFIATSKLPTAFGEFNISVFQDPVTGEEHVALSKGLENPPTDPVLVRVHSECLTGDAFASLKCDCGPQLQATQKLINEAGQGVILYLRQEGRGIGLTNKIRAYALQDQGHDTVDANLLLNLPADARRYDMCSIMLDHLKVKEVKLITNNPLKIQALKDQGINVVDRVPLTVGRNPFNEQYLKTKRERMAHLYQKDDF.

A GTP-binding site is contributed by 50 to 54; it reads RVHSE. Residues Cys-55, Cys-66, and Cys-68 each contribute to the Zn(2+) site. Residues Gln-71, 93 to 95, and Thr-115 contribute to the GTP site; that span reads EGR. Asp-127 functions as the Proton acceptor in the catalytic mechanism. The active-site Nucleophile is Arg-129. GTP-binding residues include Thr-150 and Lys-155.

Belongs to the GTP cyclohydrolase II family. Zn(2+) is required as a cofactor.

It carries out the reaction GTP + 4 H2O = 2,5-diamino-6-hydroxy-4-(5-phosphoribosylamino)-pyrimidine + formate + 2 phosphate + 3 H(+). Its pathway is cofactor biosynthesis; riboflavin biosynthesis; 5-amino-6-(D-ribitylamino)uracil from GTP: step 1/4. Functionally, catalyzes the conversion of GTP to 2,5-diamino-6-ribosylamino-4(3H)-pyrimidinone 5'-phosphate (DARP), formate and pyrophosphate. The protein is GTP cyclohydrolase-2 of Acinetobacter baumannii (strain SDF).